A 276-amino-acid chain; its full sequence is Large ribosomal subunit protein uL2 (276 aa).

The disordered stretch occupies residues 225 to 276; it reads MNPNDHPHGGGEGRNPIGRNPVTPWGKPALGAKTRKKKNPSNRFIVKRRGKK. Positions 257-276 are enriched in basic residues; sequence KTRKKKNPSNRFIVKRRGKK.

Belongs to the universal ribosomal protein uL2 family. In terms of assembly, part of the 50S ribosomal subunit. Forms a bridge to the 30S subunit in the 70S ribosome.

One of the primary rRNA binding proteins. Required for association of the 30S and 50S subunits to form the 70S ribosome, for tRNA binding and peptide bond formation. It has been suggested to have peptidyltransferase activity; this is somewhat controversial. Makes several contacts with the 16S rRNA in the 70S ribosome. The polypeptide is Large ribosomal subunit protein uL2 (Desulfitobacterium hafniense (strain DSM 10664 / DCB-2)).